We begin with the raw amino-acid sequence, 68 residues long: Ribosome modulation factor (68 aa).

This sequence belongs to the ribosome modulation factor family.

It localises to the cytoplasm. Functionally, during stationary phase, converts 70S ribosomes to an inactive dimeric form (100S ribosomes). In Alcanivorax borkumensis (strain ATCC 700651 / DSM 11573 / NCIMB 13689 / SK2), this protein is Ribosome modulation factor.